The sequence spans 217 residues: Cytochrome c biogenesis ATP-binding export protein CcmA (217 aa).

Positions 6–216 constitute an ABC transporter domain; that stretch reads LQLEQLACQR…QYKFFDQGNM (211 aa). 38-45 serves as a coordination point for ATP; the sequence is GHNGIGKT.

The protein belongs to the ABC transporter superfamily. CcmA exporter (TC 3.A.1.107) family. The complex is composed of two ATP-binding proteins (CcmA) and two transmembrane proteins (CcmB).

The protein resides in the cell inner membrane. The enzyme catalyses heme b(in) + ATP + H2O = heme b(out) + ADP + phosphate + H(+). Its function is as follows. Part of the ABC transporter complex CcmAB involved in the biogenesis of c-type cytochromes; once thought to export heme, this seems not to be the case, but its exact role is uncertain. Responsible for energy coupling to the transport system. The chain is Cytochrome c biogenesis ATP-binding export protein CcmA from Histophilus somni (strain 129Pt) (Haemophilus somnus).